The following is a 624-amino-acid chain: Actin-related protein 8 (624 aa).

N-acetylmethionine is present on Met1. Residues 1-25 show a composition bias toward basic and acidic residues; it reads MTQAEKGDAENGKEKGGEKEKEQRG. A disordered region spans residues 1 to 29; that stretch reads MTQAEKGDAENGKEKGGEKEKEQRGVKRP. The ATP site is built by Ser55 and Thr56. Ser132 carries the post-translational modification Phosphoserine. 283–286 is an ATP binding site; that stretch reads DVGD. Ser412 carries the phosphoserine modification. Residues 430–460 are disordered; the sequence is SKQEQSAKATADRKSASKPIGFEGDLRGQSS.

It belongs to the actin family. ARP8 subfamily. In terms of assembly, component of the chromatin remodeling INO80 complex; specifically part of a complex module associated with the DBINO domain of INO80. Exists as monomers and dimers, but the dimer is most probably the biologically relevant form required for stable interactions with histones that exploits the twofold symmetry of the nucleosome core.

The protein localises to the nucleus. The protein resides in the chromosome. In terms of biological role, plays an important role in the functional organization of mitotic chromosomes. Exhibits low basal ATPase activity, and unable to polymerize. Functionally, proposed core component of the chromatin remodeling INO80 complex which is involved in transcriptional regulation, DNA replication and probably DNA repair. Required for the recruitment of INO80 (and probably the INO80 complex) to sites of DNA damage Strongly prefer nucleosomes and H3-H4 tetramers over H2A-H2B dimers, suggesting it may act as a nucleosome recognition module within the complex. In Ailuropoda melanoleuca (Giant panda), this protein is Actin-related protein 8 (ACTR8).